The chain runs to 238 residues: Probable RNA/DNA demethylase ALKBH6 (238 aa).

Residues P96–P227 enclose the Fe2OG dioxygenase domain. 2-oxoglutarate contacts are provided by N103 and Y105. Fe cation-binding residues include H114, D116, and H182. Residues R218 and S220 each coordinate 2-oxoglutarate.

This sequence belongs to the alkB family. In terms of assembly, interacts with VCPKMT. Fe(2+) is required as a cofactor.

The protein resides in the cytoplasm. It is found in the nucleus. Probable Fe(2+)/2-oxoglutarate-dependent dioxygenase involved in oxidative demethylation of nucleic acids. Binds nucleic acids with a preference for ssDNA or ssRNA to other types of DNAs. May play a role in nucleic acid damage repair. The sequence is that of Probable RNA/DNA demethylase ALKBH6 (Alkbh6) from Mus musculus (Mouse).